Consider the following 627-residue polypeptide: (R)-linalool synthase, chloroplastic (627 aa).

The transit peptide at 1 to 21 directs the protein to the chloroplast; sequence MAFVSIAPLASRCCVHKSFVS. Mg(2+) is bound by residues aspartate 378, aspartate 382, and glutamate 530. Residues 378 to 382 carry the DDXXD motif motif; the sequence is DDIYD.

It belongs to the terpene synthase family. Tpsd subfamily. Requires Mg(2+) as cofactor. It depends on Mn(2+) as a cofactor.

Its subcellular location is the plastid. The protein localises to the chloroplast. The catalysed reaction is (2E)-geranyl diphosphate + H2O = (R)-linalool + diphosphate. The protein operates within terpene metabolism; oleoresin biosynthesis. In terms of biological role, terpene synthase (TPS) involved in the biosynthesis of monoterpene natural products included in conifer oleoresin secretions and volatile emissions; these compounds contribute to biotic and abiotic stress defense against herbivores and pathogens. Catalyzes the conversion of (2E)-geranyl diphosphate (GPP) to (R)-linalool. In Picea glauca (White spruce), this protein is (R)-linalool synthase, chloroplastic.